A 567-amino-acid polypeptide reads, in one-letter code: GBF-interacting protein 1 (567 aa).

Disordered regions lie at residues 70–150 (ERKK…PSGI), 164–192 (DKVDTEEQPLSKATSSSKDVVEPDKSKES), and 545–567 (PIGPSHVTNQQPQAARTNLGNNY). Composition is skewed to polar residues over residues 91 to 102 (FASSYTDASNGR) and 121 to 136 (TASSAPNNARNDTKPS). The span at 182–191 (DVVEPDKSKE) shows a compositional bias: basic and acidic residues. Positions 550–567 (HVTNQQPQAARTNLGNNY) are enriched in polar residues.

The protein belongs to the GIP1 family. As to quaternary structure, monomer, homodimer, homooligomer. Under non-reducing conditions, predominantly present in high molecular weight forms, but predominates in low molecular weight monomers under reducing conditions. Interacts with BZIP16, BZIP68 and GBF1. Interacts with LBD18. Expressed in roots, leaves, stems and flowers.

It is found in the nucleus. In terms of biological role, plant specific protein that enhances G-box-binding factor (GBF) DNA binding activity. May function as a nuclear chaperone or lever and regulate the multimeric state of GBFs. May contribute to bZIP-mediated gene regulation. Is able to refold denatured rhodanese in vitro. Reduces DNA-binding activity of BZIP16, BZIP68 and GBF1 under non-reducing conditions through direct physical interaction. Acts as a negative co-regulator in red and blue light-mediated hypocotyl elongation. Functions to promote hypocotyl elongation during the early stages of seedling development by regulating the repression effect by BZIP16 and the activation effect by BZIP68 and GBF1 on LHCB2.4 expression. Enhances transcriptional activity of LBD18 in the EXP14 promoter. May act as a transcriptional coactivator of LBD18. The chain is GBF-interacting protein 1 from Arabidopsis thaliana (Mouse-ear cress).